Here is a 108-residue protein sequence, read N- to C-terminus: Ig kappa chain V-V region MOPC 149 (108 aa).

The interval 1–23 (DIQMTQSPDYLSASVGETVTITC) is framework-1. A disulfide bridge connects residues cysteine 23 and cysteine 88. The interval 24–34 (RASENIYSYLA) is complementarity-determining-1. Positions 35-49 (WYQQKQGKSPQLLVY) are framework-2. The interval 50-56 (DAKTLVE) is complementarity-determining-2. The framework-3 stretch occupies residues 57–88 (GVPSRFSGSGSGTQFSLKINSLQPEDFGSYYC). The interval 89 to 97 (QHHYGIPFT) is complementarity-determining-3. A framework-4 region spans residues 98–108 (FGSGTKLEIKR).

In Mus musculus (Mouse), this protein is Ig kappa chain V-V region MOPC 149.